Reading from the N-terminus, the 805-residue chain is Chloride channel protein (805 aa).

Over 1 to 48 the chain is Cytoplasmic; it reads MSHEKNEASGYPEAQSWKSQEAMLGARTEVSRWRAVKNCLYRHLVKVL. A run of 2 helical transmembrane segments spans residues 49–86 and 93–116; these read GEDW…LFAL and LQYL…CQIV. Positions 122 to 126 match the Selectivity filter part_1 motif; it reads GSGIP. Position 123 (Ser-123) interacts with chloride. The segment at residues 125–132 is an intramembrane region (helical); it reads IPELKTII. 2 consecutive transmembrane segments (helical) span residues 141–159 and 166–184; these read LTLR…ALSA and EGPF…NQLL. The Selectivity filter part_2 signature appears at 164-168; sequence GKEGP. Intramembrane regions (helical) lie at residues 201–213 and 217–225; these read ILTV…ISCC and PLAGVLFSI. Transmembrane regions (helical) follow at residues 237 to 256, 283 to 311, and 320 to 339; these read YWRG…VLSV, MPAF…IVFM, and ILKK…LATL. Asn-365 carries an N-linked (GlcNAc...) asparagine glycan. Helical transmembrane passes span 388–408 and 416–439; these read LNIF…AALA and GAFV…MALL. The short motif at 416-420 is the Selectivity filter part_3 element; sequence GAFVP. Chloride is bound at residue Phe-418. The helical intramembrane region spans 456 to 470; the sequence is GEYAVIGAAAMTGAV. An intramembrane region (note=Loop between two helices) is located at residues 471 to 472; it reads TH. The segment at residues 473–484 is an intramembrane region (helical); it reads AVSTAVICFELT. Positions 485 to 489 form an intramembrane region, note=Loop between two helices; sequence GQISH. Residues 490–507 form a helical membrane-spanning segment; the sequence is VLPMMVAVILANMVAQGL. At 508 to 805 the chain is on the cytoplasmic side; sequence QPSLYDSIIQ…RTATSNSSGK (298 aa). Residue Tyr-512 participates in chloride binding. A CBS 1 domain is found at 543–601; the sequence is MVRDVTSIASTSTYGDLLHVLRQTKLKFFPFVDTPDTNTLLGSIDRTEVEGLLQRRISA. Disordered regions lie at residues 606-625 and 653-684; these read PAAA…GASF and KVQT…QKGT. In terms of domain architecture, CBS 2 spans 719-776; it reads IDQSPFQLVEGTSLQKTHTLFSLLGLDRAYVTSMGKLVGVVALAEIQAAIEGSYQKGF.

Belongs to the chloride channel (TC 2.A.49) family. ClC-0 subfamily. Homodimer. Each subunit contains a channel ('Double barreled channel').

It is found in the membrane. Its function is as follows. Voltage-gated chloride channel. This channel is thought to ensure the high conductance of the non-innervated membrane of the electrocyte necessary for efficient current generation caused by sodium influx through the acetylcholine receptor at the innervated membrane. This is Chloride channel protein from Torpedo marmorata (Marbled electric ray).